The primary structure comprises 590 residues: Sulfoacetaldehyde acetyltransferase (590 aa).

This sequence belongs to the TPP enzyme family. It depends on Mg(2+) as a cofactor. Requires thiamine diphosphate as cofactor.

Its subcellular location is the cytoplasm. It catalyses the reaction acetyl phosphate + sulfite + H(+) = sulfoacetaldehyde + phosphate. It functions in the pathway organosulfur degradation; taurine degradation via aerobic pathway; acetyl phosphate and sulfite from taurine: step 2/2. The polypeptide is Sulfoacetaldehyde acetyltransferase (Rhodobacter capsulatus (strain ATCC BAA-309 / NBRC 16581 / SB1003)).